The primary structure comprises 218 residues: Small ribosomal subunit protein uS3c (218 aa).

Residues 47–118 (IRRHMRSSSN…KLNIAIVKVA (72 aa)) form the KH type-2 domain.

Belongs to the universal ribosomal protein uS3 family. Part of the 30S ribosomal subunit.

It is found in the plastid. It localises to the chloroplast. This Cycas taitungensis (Prince sago) protein is Small ribosomal subunit protein uS3c (rps3).